A 400-amino-acid chain; its full sequence is Imidazolonepropionase (400 aa).

Fe(3+)-binding residues include His-70 and His-72. Zn(2+) contacts are provided by His-70 and His-72. Residues Arg-79, Tyr-142, and His-175 each contribute to the 4-imidazolone-5-propanoate site. Residue Tyr-142 participates in N-formimidoyl-L-glutamate binding. His-239 contributes to the Fe(3+) binding site. His-239 serves as a coordination point for Zn(2+). 4-imidazolone-5-propanoate is bound at residue Gln-242. A Fe(3+)-binding site is contributed by Asp-314. Asp-314 lines the Zn(2+) pocket. The N-formimidoyl-L-glutamate site is built by Asn-316 and Gly-318. Residue Thr-319 coordinates 4-imidazolone-5-propanoate.

This sequence belongs to the metallo-dependent hydrolases superfamily. HutI family. Zn(2+) is required as a cofactor. Fe(3+) serves as cofactor.

The protein resides in the cytoplasm. It catalyses the reaction 4-imidazolone-5-propanoate + H2O = N-formimidoyl-L-glutamate. The protein operates within amino-acid degradation; L-histidine degradation into L-glutamate; N-formimidoyl-L-glutamate from L-histidine: step 3/3. Catalyzes the hydrolytic cleavage of the carbon-nitrogen bond in imidazolone-5-propanoate to yield N-formimidoyl-L-glutamate. It is the third step in the universal histidine degradation pathway. This chain is Imidazolonepropionase, found in Methylobacterium sp. (strain 4-46).